A 710-amino-acid polypeptide reads, in one-letter code: Choline transporter-like protein 2 (710 aa).

Residues 1–34 lie on the Cytoplasmic side of the membrane; it reads MEDDGKSPPDSAYGEPKKYDPNFKGPIQNRGCTD. A helical membrane pass occupies residues 35 to 55; it reads ILCCILIVLGIIAYVAVGIVA. At 56–236 the chain is on the extracellular side; the sequence is WTYGDPRKVI…KIFEDYTVSW (181 aa). Asn147, Asn190, and Asn204 each carry an N-linked (GlcNAc...) asparagine glycan. The helical transmembrane segment at 237–257 threads the bilayer; sequence YWIIIGLIIAMVISLIFVVLL. The Cytoplasmic segment spans residues 258 to 260; it reads RFL. The chain crosses the membrane as a helical span at residues 261 to 281; that stretch reads AGIMVWVMIVLVIAVMGYGIF. Residues 282 to 319 lie on the Extracellular side of the membrane; that stretch reads HCYMEYARLKGQSGSDVTLKDIGFQTDIRVYLHLRQTW. Residues 320-340 form a helical membrane-spanning segment; that stretch reads LAFMIILCILEVIVILLLIFL. Topologically, residues 341-368 are cytoplasmic; that stretch reads RKRIMIAIALIKEASRAVGFVMSSLVFP. The helical transmembrane segment at 369-389 threads the bilayer; sequence LFTFLLVCLCIAYWAITAVFL. Residues 390 to 458 lie on the Extracellular side of the membrane; it reads STSNEAVYKV…FQIYNAFMFL (69 aa). Asn401, Asn418, and Asn421 each carry an N-linked (GlcNAc...) asparagine glycan. Residues 459 to 481 form a helical membrane-spanning segment; it reads WLANFVIALGQVTLAGAFASYYW. Residues 482–508 lie on the Cytoplasmic side of the membrane; sequence AFKKPDDMPAFPIFSSLGRALRYHTGS. A helical transmembrane segment spans residues 509-529; sequence LAFGSLILAIVQMIRILLEYL. The Extracellular portion of the chain corresponds to 530–567; sequence DHKLKGADNKCARFLLCCLKCCFWCLEKFIKFLNRNAY. Residues 568-588 traverse the membrane as a helical segment; sequence IMIAIYGTNFCTSARNAFFLL. Over 589 to 603 the chain is Cytoplasmic; the sequence is MRNIIRVAVLDKVTD. A helical membrane pass occupies residues 604–624; the sequence is FLLFLGKLLVVGCVGILAFFF. At 625–642 the chain is on the extracellular side; that stretch reads FSRRIQIVQDTAPTLNYY. A helical membrane pass occupies residues 643–663; that stretch reads WVPILTVILGSYLIAHGFFSV. Residues 664–710 lie on the Cytoplasmic side of the membrane; sequence YGMCVDTLFLCFLEDLERNDGSTERPYFMSGSLQKLLNKSNQTKPDK.

It belongs to the CTL (choline transporter-like) family.

It localises to the cell membrane. Its subcellular location is the mitochondrion outer membrane. It catalyses the reaction choline(out) + n H(+)(in) = choline(in) + n H(+)(out). The enzyme catalyses ethanolamine(out) + n H(+)(in) = ethanolamine(in) + n H(+)(out). Its function is as follows. Choline/H+ antiporter, mainly in mitochodria. Also acts as a low-affinity ethanolamine/H+ antiporter, regulating the supply of extracellular ethanolamine (Etn) for the CDP-Etn pathway, redistribute intracellular Etn and balance the CDP-Cho and CDP-Etn arms of the Kennedy pathway. The sequence is that of Choline transporter-like protein 2 (slc44a2) from Xenopus laevis (African clawed frog).